Reading from the N-terminus, the 143-residue chain is MITNLRRRTAMAAAGLGAALGLGILLVPTVDAHLANGSMSEVMMSEIAGLPIPPIIHYGAIAYAPSGASGKAWHQRTPARAEQVALEKCGDKTCKVVSRFTRCGAVAYNGSKYQGGTGLTRRAAEDDAVNRLEGGRIVNWACN.

An N-terminal signal peptide occupies residues 1–32; that stretch reads MITNLRRRTAMAAAGLGAALGLGILLVPTVDA.

The protein to M.tuberculosis Rv1269c.

This is an uncharacterized protein from Mycobacterium tuberculosis (strain CDC 1551 / Oshkosh).